A 600-amino-acid chain; its full sequence is Aspartate--tRNA(Asp/Asn) ligase (600 aa).

E187 is a binding site for L-aspartate. The aspartate stretch occupies residues 211-214 (QIFK). L-aspartate contacts are provided by R233 and H463. 233 to 235 (RDE) provides a ligand contact to ATP. Position 497 (E497) interacts with ATP. An L-aspartate-binding site is contributed by R504. 549 to 552 (GIDR) provides a ligand contact to ATP.

This sequence belongs to the class-II aminoacyl-tRNA synthetase family. Type 1 subfamily. In terms of assembly, homodimer.

The protein localises to the cytoplasm. It carries out the reaction tRNA(Asx) + L-aspartate + ATP = L-aspartyl-tRNA(Asx) + AMP + diphosphate. Functionally, aspartyl-tRNA synthetase with relaxed tRNA specificity since it is able to aspartylate not only its cognate tRNA(Asp) but also tRNA(Asn). Reaction proceeds in two steps: L-aspartate is first activated by ATP to form Asp-AMP and then transferred to the acceptor end of tRNA(Asp/Asn). This is Aspartate--tRNA(Asp/Asn) ligase from Wolbachia sp. subsp. Brugia malayi (strain TRS).